Consider the following 271-residue polypeptide: MGNTTSERVSGERHGAKAARAEGGGHGPGKEHKIMVGSTDDPSVFSLPDSKLPGDKEFVPWQQDLDDSVKPTQQARPTVIRWSEGGKEVFISGSFNNWSTKIPLIKSHNDFVAILDLPEGEHQYKFFVDGQWVHDPSEPVVTSQLGTINNLIHVKKSDFEVFDALKLDSMESSETSCRDLSSSPPGPYGQEMYVFRSEERFKSPPILPPHLLQVILNKDTNISCDPALLPEPNHVMLNHLYALSTKDSVMVLSATHRYKKKYVTTLLYKPI.

The disordered stretch occupies residues 1–47; that stretch reads MGNTTSERVSGERHGAKAARAEGGGHGPGKEHKIMVGSTDDPSVFSL. S38 bears the Phosphoserine; by ULK1 mark. Residue T39 is modified to Phosphothreonine; by ULK1. The residue at position 68 (S68) is a Phosphoserine; by ULK1. Residues S94 and S107 each carry the phosphoserine modification. T147 bears the Phosphothreonine mark. Phosphoserine occurs at positions 157 and 169. S173 carries the phosphoserine; by ULK1 modification. A Phosphoserine modification is found at S183.

Belongs to the 5'-AMP-activated protein kinase beta subunit family. In terms of assembly, AMPK is a heterotrimer of an alpha catalytic subunit (PRKAA1 or PRKAA2), a beta (PRKAB1 or PRKAB2) and a gamma non-catalytic subunits (PRKAG1, PRKAG2 or PRKAG3). Post-translationally, phosphorylated when associated with the catalytic subunit (PRKAA1 or PRKAA2). Phosphorylated by ULK1 and ULK2; leading to negatively regulate AMPK activity and suggesting the existence of a regulatory feedback loop between ULK1, ULK2 and AMPK.

Functionally, non-catalytic subunit of AMP-activated protein kinase (AMPK), an energy sensor protein kinase that plays a key role in regulating cellular energy metabolism. In response to reduction of intracellular ATP levels, AMPK activates energy-producing pathways and inhibits energy-consuming processes: inhibits protein, carbohydrate and lipid biosynthesis, as well as cell growth and proliferation. AMPK acts via direct phosphorylation of metabolic enzymes, and by longer-term effects via phosphorylation of transcription regulators. Also acts as a regulator of cellular polarity by remodeling the actin cytoskeleton; probably by indirectly activating myosin. Beta non-catalytic subunit acts as a scaffold on which the AMPK complex assembles, via its C-terminus that bridges alpha (PRKAA1 or PRKAA2) and gamma subunits (PRKAG1, PRKAG2 or PRKAG3). The polypeptide is 5'-AMP-activated protein kinase subunit beta-2 (Prkab2) (Rattus norvegicus (Rat)).